The sequence spans 350 residues: Uroporphyrinogen decarboxylase (350 aa).

Substrate contacts are provided by residues 28 to 32 (RQAGR), aspartate 78, tyrosine 155, serine 210, and histidine 325.

This sequence belongs to the uroporphyrinogen decarboxylase family. As to quaternary structure, homodimer.

The protein resides in the cytoplasm. It carries out the reaction uroporphyrinogen III + 4 H(+) = coproporphyrinogen III + 4 CO2. It participates in porphyrin-containing compound metabolism; protoporphyrin-IX biosynthesis; coproporphyrinogen-III from 5-aminolevulinate: step 4/4. Functionally, catalyzes the decarboxylation of four acetate groups of uroporphyrinogen-III to yield coproporphyrinogen-III. This Trichormus variabilis (strain ATCC 29413 / PCC 7937) (Anabaena variabilis) protein is Uroporphyrinogen decarboxylase.